The primary structure comprises 340 residues: Phenylalanine--tRNA ligase alpha subunit (340 aa).

Mg(2+) is bound at residue Glu-255.

It belongs to the class-II aminoacyl-tRNA synthetase family. Phe-tRNA synthetase alpha subunit type 1 subfamily. As to quaternary structure, tetramer of two alpha and two beta subunits. It depends on Mg(2+) as a cofactor.

It is found in the cytoplasm. The catalysed reaction is tRNA(Phe) + L-phenylalanine + ATP = L-phenylalanyl-tRNA(Phe) + AMP + diphosphate + H(+). This Desulforamulus reducens (strain ATCC BAA-1160 / DSM 100696 / MI-1) (Desulfotomaculum reducens) protein is Phenylalanine--tRNA ligase alpha subunit.